We begin with the raw amino-acid sequence, 328 residues long: UPF0285 protein Mevan_1551 (328 aa).

Belongs to the UPF0285 family.

The protein is UPF0285 protein Mevan_1551 of Methanococcus vannielii (strain ATCC 35089 / DSM 1224 / JCM 13029 / OCM 148 / SB).